A 417-amino-acid polypeptide reads, in one-letter code: NADH-quinone oxidoreductase subunit D (417 aa).

It belongs to the complex I 49 kDa subunit family. As to quaternary structure, NDH-1 is composed of 14 different subunits. Subunits NuoB, C, D, E, F, and G constitute the peripheral sector of the complex.

The protein localises to the cell inner membrane. It carries out the reaction a quinone + NADH + 5 H(+)(in) = a quinol + NAD(+) + 4 H(+)(out). In terms of biological role, NDH-1 shuttles electrons from NADH, via FMN and iron-sulfur (Fe-S) centers, to quinones in the respiratory chain. The immediate electron acceptor for the enzyme in this species is believed to be ubiquinone. Couples the redox reaction to proton translocation (for every two electrons transferred, four hydrogen ions are translocated across the cytoplasmic membrane), and thus conserves the redox energy in a proton gradient. The protein is NADH-quinone oxidoreductase subunit D of Burkholderia vietnamiensis (strain G4 / LMG 22486) (Burkholderia cepacia (strain R1808)).